The chain runs to 177 residues: Isopentenyl-diphosphate Delta-isomerase 2 (177 aa).

Mn(2+)-binding residues include His-24 and His-30. The 133-residue stretch at 28-160 folds into the Nudix hydrolase domain; it reads MLHRAFSIFV…PDVYTVWFKK (133 aa). Cys-65 is an active-site residue. Cys-65 contributes to the Mg(2+) binding site. His-67 is a binding site for Mn(2+). Residue Glu-85 coordinates Mg(2+). Mn(2+) contacts are provided by Glu-110 and Glu-112. Glu-112 is a catalytic residue.

It belongs to the IPP isomerase type 1 family. In terms of assembly, homodimer. It depends on Mg(2+) as a cofactor. Requires Mn(2+) as cofactor.

The protein resides in the cytoplasm. It catalyses the reaction isopentenyl diphosphate = dimethylallyl diphosphate. It participates in isoprenoid biosynthesis; dimethylallyl diphosphate biosynthesis; dimethylallyl diphosphate from isopentenyl diphosphate: step 1/1. In terms of biological role, catalyzes the 1,3-allylic rearrangement of the homoallylic substrate isopentenyl (IPP) to its highly electrophilic allylic isomer, dimethylallyl diphosphate (DMAPP). This is Isopentenyl-diphosphate Delta-isomerase 2 from Photorhabdus laumondii subsp. laumondii (strain DSM 15139 / CIP 105565 / TT01) (Photorhabdus luminescens subsp. laumondii).